The chain runs to 391 residues: Ectodysplasin-A (391 aa).

The span at Met-1–Gly-21 shows a compositional bias: basic and acidic residues. A disordered region spans residues Met-1–Arg-28. Residues Met-1 to Arg-41 lie on the Cytoplasmic side of the membrane. Residues Leu-42 to Leu-62 form a helical; Signal-anchor for type II membrane protein membrane-spanning segment. Residues Glu-63 to Ser-391 lie on the Extracellular side of the membrane. Disordered stretches follow at residues Arg-72 to Asp-129 and Tyr-146 to Arg-244. The span at Thr-86–Leu-96 shows a compositional bias: low complexity. Residues Gly-180–Pro-229 enclose the Collagen-like domain. 2 stretches are compositionally biased toward pro residues: residues Pro-181–Pro-203 and Pro-216–Pro-228. The 137-residue stretch at Ala-249–Leu-385 folds into the THD domain. Asn-313 carries N-linked (GlcNAc...) asparagine glycosylation. Residues Cys-332 and Cys-346 are joined by a disulfide bond. N-linked (GlcNAc...) asparagine glycosylation occurs at Asn-372.

This sequence belongs to the tumor necrosis factor family. Homotrimer. The homotrimers may then dimerize and form higher-order oligomers. N-glycosylated. In terms of processing, processing by furin produces a secreted form.

It localises to the cell membrane. The protein resides in the secreted. In terms of biological role, cytokine which is involved in epithelial-mesenchymal signaling during morphogenesis of ectodermal organs. Functions as a ligand activating the DEATH-domain containing receptors EDAR and EDA2R. Isoform TAA binds only to the receptor EDAR, while isoform TA-A2 binds exclusively to the receptor EDA2R. May also play a role in cell adhesion. Functionally, isoform TAA binds only to the receptor EDAR, while isoform TA-A2 binds exclusively to the receptor EDA2R. Its function is as follows. Isoform TA-A2 binds exclusively to the receptor EDA2R. This Mus musculus (Mouse) protein is Ectodysplasin-A (Eda).